Reading from the N-terminus, the 304-residue chain is Undecaprenyl-diphosphatase (304 aa).

7 helical membrane passes run 1 to 21 (MSLL…FLPV), 54 to 74 (TTLA…AAGL), 90 to 110 (LAWF…LFEE), 114 to 134 (ALGN…LLAA), 192 to 212 (FLLS…KTVP), 225 to 245 (LVGT…LLGW), and 253 to 273 (LFVV…WQGV).

Belongs to the UppP family.

It is found in the cell inner membrane. The catalysed reaction is di-trans,octa-cis-undecaprenyl diphosphate + H2O = di-trans,octa-cis-undecaprenyl phosphate + phosphate + H(+). In terms of biological role, catalyzes the dephosphorylation of undecaprenyl diphosphate (UPP). Confers resistance to bacitracin. The chain is Undecaprenyl-diphosphatase from Anaeromyxobacter sp. (strain Fw109-5).